Reading from the N-terminus, the 462-residue chain is Cytochrome b558/566 subunit A (462 aa).

At 1 to 8 the chain is on the cytoplasmic side; sequence MSLKIKSK. Residues 9 to 26 form a helical membrane-spanning segment; the sequence is ITIGVLLIIFLLSIIFTL. Over 27–431 the chain is Extracellular; sequence ENVSLAQTSP…TSTSPVTTIS (405 aa). 16 N-linked (GlcNAc...) asparagine glycosylation sites follow: Asn-28, Asn-65, Asn-91, Asn-121, Asn-144, Asn-164, Asn-174, Asn-183, Asn-211, Asn-278, Asn-279, Asn-293, Asn-316, Asn-339, Asn-353, and Asn-376. The chain crosses the membrane as a helical span at residues 432–456; it reads SAIPPVTLYVTIIGVVVALVALVIL. At 457–462 the chain is on the cytoplasmic side; it reads YVVFRR.

Heme serves as cofactor. Post-translationally, N-glycosylated on at least seven Asn residues by identical hexasaccharide units composed of Man, GlcNAc, Glc and 6-deoxy-6-sulfoglucose residues in the molar ration of 2:2:1:1. O-glycosylated on probably as many as 35 positions by single Man residues.

Its subcellular location is the cell membrane. In terms of biological role, monoheme cytochrome whose physiological function is not yet clear. This chain is Cytochrome b558/566 subunit A (cbsA), found in Sulfolobus acidocaldarius (strain ATCC 33909 / DSM 639 / JCM 8929 / NBRC 15157 / NCIMB 11770).